The sequence spans 188 residues: Ribosome-recycling factor (188 aa).

It belongs to the RRF family.

It is found in the cytoplasm. Functionally, responsible for the release of ribosomes from messenger RNA at the termination of protein biosynthesis. May increase the efficiency of translation by recycling ribosomes from one round of translation to another. This Cereibacter sphaeroides (strain ATCC 17029 / ATH 2.4.9) (Rhodobacter sphaeroides) protein is Ribosome-recycling factor.